Here is a 149-residue protein sequence, read N- to C-terminus: Large ribosomal subunit protein uL15 (149 aa).

The span at 1–29 (MVSHLKKTRKLRGHVSHGHGRVGKHRKGG) shows a compositional bias: basic residues. Positions 1–38 (MVSHLKKTRKLRGHVSHGHGRVGKHRKGGCRGGRGKAG) are disordered.

Belongs to the universal ribosomal protein uL15 family.

The sequence is that of Large ribosomal subunit protein uL15 (RPL27A) from Tetrahymena thermophila.